A 353-amino-acid polypeptide reads, in one-letter code: Guanine nucleotide-binding protein subunit beta-5 (353 aa).

7 WD repeats span residues 61–100 (GHGN…KEHA), 103–142 (MPCT…NENM), 151–192 (MHTN…QSFH), 194–236 (HGAD…QAFE), 237–276 (THES…EVAI), 278–320 (SKES…RVSI), and 323–352 (GHEN…LRVW).

This sequence belongs to the WD repeat G protein beta family. As to quaternary structure, component of a complex composed of RGS9 (isoform RGS9-1), GNB5 and RGS9BP; within this complex, the presence of GNB5 stabilizes both itself and RGS9 and increases RGS9 GTPase-activating protein (GAP) activity. Interacts with RGS7, forming the RGS7-GNB5 complex; within this complex, the presence of GNB5 increases RGS7 GTPase-activating protein (GAP) activity. Interacts with GPR158; promotes the GTPase activator activity of the RGS7-GNB5 complex in absence of glycine, in contrast GTPase activator activity of the RGS7-GNB5 complex is inhibited in presence of glycine. Interacts with RGS6. Detected in brain.

It is found in the membrane. In terms of biological role, enhances GTPase-activating protein (GAP) activity of regulator of G protein signaling (RGS) proteins, such as RGS7 and RGS9, hence involved in the termination of the signaling initiated by the G protein coupled receptors (GPCRs) by accelerating the GTP hydrolysis on the G-alpha subunits, thereby promoting their inactivation. Increases RGS7 GTPase-activating protein (GAP) activity, thereby regulating mood and cognition. Increases RGS9 GTPase-activating protein (GAP) activity, hence contributes to the deactivation of G protein signaling initiated by D(2) dopamine receptors. May play an important role in neuronal signaling, including in the parasympathetic, but not sympathetic, control of heart rate. The chain is Guanine nucleotide-binding protein subunit beta-5 (Gnb5) from Rattus norvegicus (Rat).